The following is a 414-amino-acid chain: MQTFLKGKRVGYWLSEKKIKKLNFQAFAELCRKRGMEVVQLNLSRPIEEQGPLDVIIHKLTDVILEADQNDSQSLELVHRFQEYIDAHPETIVLDPLPAIRTLLDRSKSYELIRKIEAYMEDDRICSPPFMELTSLCGDDTMRLLEKNGLTFPFICKTRVAHGTNSHEMAIVFNQEGLNAIQPPCVVQNFINHNAVLYKVFVVGESYTVVQRPSLKNFSAGTSDRESIFFNSHNVSKPESSSVLTELDKIEGVFERPSDEVIRELSRALRQALGVSLFGIDIIINNQTGQHAVIDINAFPGYEGVSEFFTDLLNHIATVLQGQSTAMAATGDVALLRHSKLLAEPAGGLVGERTCSASPGCCGSMMGQDAPWKAEADAGGTAKLPHQRLGCNAGVSPSFQQHCVASLATKASSQ.

Lys18 lines the 1D-myo-inositol 1,3,4-trisphosphate pocket. Arg106 and Lys157 together coordinate ATP. The ATP-grasp domain occupies 117–325 (EAYMEDDRIC…IATVLQGQST (209 aa)). Positions 167 and 199 each coordinate 1D-myo-inositol 1,3,4-trisphosphate. ATP contacts are provided by residues 188–199 (QNFINHNAVLYK), Ser214, Ser232, and Ser236. Positions 281, 295, and 297 each coordinate Mg(2+). A 1D-myo-inositol 1,3,4-trisphosphate-binding site is contributed by Asn297. 2 positions are modified to N6-acetyllysine; by EP300 and CREBBP: Lys340 and Lys383. A Phosphoserine modification is found at Ser396. The residue at position 410 (Lys410) is an N6-acetyllysine; by EP300 and CREBBP.

It belongs to the ITPK1 family. Monomer. Interacts with GPS1/COPS1. It depends on Mg(2+) as a cofactor. Acetylation by EP300 and CREBBP destabilizes ITPK1, and down-regulates enzymatic activity. Deacetylated by SIRT1. Expressed in brain &gt; heart &gt; skeletal muscle = kidney = pancreas = liver = placenta &gt; lung. In brain, it is expressed in cerebellum, cerebral cortex, medulla, spinal cord, occipital lobe, frontal lobe, temporal lobe and putamen.

The catalysed reaction is 1D-myo-inositol 3,4,5,6-tetrakisphosphate + ATP = 1D-myo-inositol 1,3,4,5,6-pentakisphosphate + ADP + H(+). It catalyses the reaction 1D-myo-inositol 1,3,4-trisphosphate + ATP = 1D-myo-inositol 1,3,4,5-tetrakisphosphate + ADP + H(+). The enzyme catalyses 1D-myo-inositol 1,3,4-trisphosphate + ATP = 1D-myo-inositol 1,3,4,6-tetrakisphosphate + ADP + H(+). It carries out the reaction 1D-myo-inositol 3,4,6-trisphosphate + ATP = 1D-myo-inositol 1,3,4,6-tetrakisphosphate + ADP + H(+). The catalysed reaction is 1D-myo-inositol 1,3,4-trisphosphate + 1D-myo-inositol 1,3,4,5,6-pentakisphosphate = 1D-myo-inositol 3,4,5,6-tetrakisphosphate + 1D-myo-inositol 1,3,4,6-tetrakisphosphate. It catalyses the reaction 1D-myo-inositol 1,3,4-trisphosphate + 1D-myo-inositol 1,3,4,5,6-pentakisphosphate = 1D-myo-inositol 3,4,5,6-tetrakisphosphate + 1D-myo-inositol 1,3,4,5-tetrakisphosphate. Kinase that can phosphorylate various inositol polyphosphate such as Ins(3,4,5,6)P4 or Ins(1,3,4)P3. Phosphorylates Ins(3,4,5,6)P4 at position 1 to form Ins(1,3,4,5,6)P5. This reaction is thought to have regulatory importance, since Ins(3,4,5,6)P4 is an inhibitor of plasma membrane Ca(2+)-activated Cl(-) channels, while Ins(1,3,4,5,6)P5 is not. Also phosphorylates Ins(1,3,4)P3 on O-5 and O-6 to form Ins(1,3,4,6)P4, an essential molecule in the hexakisphosphate (InsP6) pathway. Also acts as an inositol polyphosphate phosphatase that dephosphorylates Ins(1,3,4,5)P4 and Ins(1,3,4,6)P4 to Ins(1,3,4)P3, and Ins(1,3,4,5,6)P5 to Ins(3,4,5,6)P4. May also act as an isomerase that interconverts the inositol tetrakisphosphate isomers Ins(1,3,4,5)P4 and Ins(1,3,4,6)P4 in the presence of ADP and magnesium. Probably acts as the rate-limiting enzyme of the InsP6 pathway. Modifies TNF-alpha-induced apoptosis by interfering with the activation of TNFRSF1A-associated death domain. Plays an important role in MLKL-mediated necroptosis. Produces highly phosphorylated inositol phosphates such as inositolhexakisphosphate (InsP6) which bind to MLKL mediating the release of an N-terminal auto-inhibitory region leading to its activation. Essential for activated phospho-MLKL to oligomerize and localize to the cell membrane during necroptosis. This Homo sapiens (Human) protein is Inositol-tetrakisphosphate 1-kinase.